Reading from the N-terminus, the 451-residue chain is Tubulin beta chain (451 aa).

GTP-binding residues include Q11, E69, S138, G142, T143, G144, N204, and N226. E69 contacts Mg(2+). The segment at 426-451 (QDATAEEEGEFDENEGAEGEEQPADY) is disordered. Residues 429–451 (TAEEEGEFDENEGAEGEEQPADY) show a composition bias toward acidic residues.

Belongs to the tubulin family. Dimer of alpha and beta chains. A typical microtubule is a hollow water-filled tube with an outer diameter of 25 nm and an inner diameter of 15 nM. Alpha-beta heterodimers associate head-to-tail to form protofilaments running lengthwise along the microtubule wall with the beta-tubulin subunit facing the microtubule plus end conferring a structural polarity. Microtubules usually have 13 protofilaments but different protofilament numbers can be found in some organisms and specialized cells. It depends on Mg(2+) as a cofactor.

Its subcellular location is the cytoplasm. It localises to the cytoskeleton. In terms of biological role, tubulin is the major constituent of microtubules, a cylinder consisting of laterally associated linear protofilaments composed of alpha- and beta-tubulin heterodimers. Microtubules grow by the addition of GTP-tubulin dimers to the microtubule end, where a stabilizing cap forms. Below the cap, tubulin dimers are in GDP-bound state, owing to GTPase activity of alpha-tubulin. The sequence is that of Tubulin beta chain from Naegleria pringsheimi (Amoeba).